The chain runs to 165 residues: Endoribonuclease YbeY (165 aa).

Positions 130, 134, and 140 each coordinate Zn(2+).

The protein belongs to the endoribonuclease YbeY family. Zn(2+) is required as a cofactor.

The protein localises to the cytoplasm. In terms of biological role, single strand-specific metallo-endoribonuclease involved in late-stage 70S ribosome quality control and in maturation of the 3' terminus of the 16S rRNA. This Streptococcus gordonii (strain Challis / ATCC 35105 / BCRC 15272 / CH1 / DL1 / V288) protein is Endoribonuclease YbeY.